Reading from the N-terminus, the 504-residue chain is MENQLWQSTLGCCSQYQESPQDAENILFLLLGLIILVNISINVTTVIWHGLQNAIDKMFSRMHQKTAEVQVTECPPKEPQPANVQDVHIHCVLDPVQVKMAQPTQCSSSSTHYFRKHSNDRRSRRRYCYPRGSLQIRQSNQQQSCHSRQQRLRNNRQFSHGYPPFRKQRQSHKASQTRPMPFFDLEDRDSLLEDDQSCPHPKQPRRSRGGLYKPVRLASNAGLWGRQGGILASLPLPSLYLSPEMRRLPKRVEAKSELRLQGFGPHYSQSRICGNVEAEQWASSPPPPRRLLPNPSWVTVGYSPFPSGGHIPYDARDQWRRGTEGCEPPPAFVSRNLRSDAQGYRDHSSSQAHRQNFPSYTHSQPNHSPPQSVGYSSRESHEVRRRAPDWSEAFPSRHPLTTSTSLTALGEASYQRAPTASSGLVIPHSSQRLAEGQISDPTPPATTFVPLSRNPGGNANYQVYDSLELKRQVQENRGRASSLPPPSTSASRPSLHRSRTGKLN.

The chain crosses the membrane as a helical span at residues 26-46; the sequence is ILFLLLGLIILVNISINVTTV. Residues 103–112 are compositionally biased toward polar residues; the sequence is PTQCSSSSTH. Disordered stretches follow at residues 103-180, 313-402, and 431-504; these read PTQC…TRPM, YDAR…PLTT, and QRLA…GKLN. Positions 113–128 are enriched in basic residues; that stretch reads YFRKHSNDRRSRRRYC. Polar residues predominate over residues 135-147; it reads QIRQSNQQQSCHS. Over residues 313-324 the composition is skewed to basic and acidic residues; it reads YDARDQWRRGTE. Positions 349 to 377 are enriched in polar residues; the sequence is SSQAHRQNFPSYTHSQPNHSPPQSVGYSS. 2 stretches are compositionally biased toward basic and acidic residues: residues 378–389 and 467–478; these read RESHEVRRRAPD and LELKRQVQENRG. Basic residues predominate over residues 494-504; that stretch reads SLHRSRTGKLN.

The protein resides in the membrane. This is an uncharacterized protein from Rattus norvegicus (Rat).